The following is a 282-amino-acid chain: Glycine/sarcosine N-methyltransferase (282 aa).

A compositionally biased stretch (polar residues) spans 1 to 23 (MTSTQNHPLQTQDDQQRFGQSPE). The segment at 1-27 (MTSTQNHPLQTQDDQQRFGQSPESVRE) is disordered. S-adenosyl-L-methionine-binding positions include tyrosine 35, tryptophan 43, arginine 52, alanine 76, aspartate 97, 123-124 (DW), and leucine 141. Positions 143, 176, and 217 each coordinate substrate.

It belongs to the class I-like SAM-binding methyltransferase superfamily. Glycine N-methyltransferase family. Monomer.

It catalyses the reaction glycine + 2 S-adenosyl-L-methionine = N,N-dimethylglycine + 2 S-adenosyl-L-homocysteine + 2 H(+). The catalysed reaction is glycine + S-adenosyl-L-methionine = sarcosine + S-adenosyl-L-homocysteine + H(+). It carries out the reaction sarcosine + S-adenosyl-L-methionine = N,N-dimethylglycine + S-adenosyl-L-homocysteine + H(+). It participates in amine and polyamine biosynthesis; betaine biosynthesis via glycine pathway; betaine from glycine: step 1/3. It functions in the pathway amine and polyamine biosynthesis; betaine biosynthesis via glycine pathway; betaine from glycine: step 2/3. Functionally, catalyzes the methylation of glycine and sarcosine to sarcosine and dimethylglycine, respectively, with S-adenosylmethionine (AdoMet) acting as the methyl donor. It has strict specificity for glycine and sarcosine as the methyl group acceptors. The sequence is that of Glycine/sarcosine N-methyltransferase from Parasynechococcus marenigrum (strain WH8102).